The chain runs to 266 residues: Exosome complex component Rrp42 (266 aa).

This sequence belongs to the RNase PH family. Rrp42 subfamily. Component of the archaeal exosome complex. Forms a hexameric ring-like arrangement composed of 3 Rrp41-Rrp42 heterodimers. The hexameric ring associates with a trimer of Rrp4 and/or Csl4 subunits.

The protein resides in the cytoplasm. Functionally, non-catalytic component of the exosome, which is a complex involved in RNA degradation. Contributes to the structuring of the Rrp41 active site. In Methanosarcina mazei (strain ATCC BAA-159 / DSM 3647 / Goe1 / Go1 / JCM 11833 / OCM 88) (Methanosarcina frisia), this protein is Exosome complex component Rrp42.